The following is a 245-amino-acid chain: MSRIDGRTPEQLRPVTIERGWSKHAEGSVLISFGDTKVFCTASVTEGVPRWRKGSGEGWVTAEYSMLPRSTNTRGDREAVRGKIGGRTHEISRLIGRSLRAVIDCKALGENTIVLDCDVLQADGGTRTAAITGAYVALADAVAWAQGKKIVKAGRKPLTDTVAAISVGIVDGTPLLDLCYEEDVRAETDMNVVCTGDGRFVEVQGTAEGAPFDRKELGALLDLATAGCVDLAALQRDALVRTQDA.

Phosphate contacts are provided by residues Arg-87 and 125 to 127 (GTR).

The protein belongs to the RNase PH family. In terms of assembly, homohexameric ring arranged as a trimer of dimers.

It carries out the reaction tRNA(n+1) + phosphate = tRNA(n) + a ribonucleoside 5'-diphosphate. Phosphorolytic 3'-5' exoribonuclease that plays an important role in tRNA 3'-end maturation. Removes nucleotide residues following the 3'-CCA terminus of tRNAs; can also add nucleotides to the ends of RNA molecules by using nucleoside diphosphates as substrates, but this may not be physiologically important. Probably plays a role in initiation of 16S rRNA degradation (leading to ribosome degradation) during starvation. The chain is Ribonuclease PH from Streptomyces griseus subsp. griseus (strain JCM 4626 / CBS 651.72 / NBRC 13350 / KCC S-0626 / ISP 5235).